Reading from the N-terminus, the 351-residue chain is Phosphoribosylformylglycinamidine cyclo-ligase (351 aa).

Belongs to the AIR synthase family.

It localises to the cytoplasm. It catalyses the reaction 2-formamido-N(1)-(5-O-phospho-beta-D-ribosyl)acetamidine + ATP = 5-amino-1-(5-phospho-beta-D-ribosyl)imidazole + ADP + phosphate + H(+). Its pathway is purine metabolism; IMP biosynthesis via de novo pathway; 5-amino-1-(5-phospho-D-ribosyl)imidazole from N(2)-formyl-N(1)-(5-phospho-D-ribosyl)glycinamide: step 2/2. The protein is Phosphoribosylformylglycinamidine cyclo-ligase of Xylella fastidiosa (strain Temecula1 / ATCC 700964).